A 505-amino-acid chain; its full sequence is Deoxyguanosinetriphosphate triphosphohydrolase (505 aa).

Positions 66 to 273 (RLTHSMEVQQ…MEAADDISYC (208 aa)) constitute an HD domain.

This sequence belongs to the dGTPase family. Type 1 subfamily. Homotetramer. The cofactor is Mg(2+).

The catalysed reaction is dGTP + H2O = 2'-deoxyguanosine + triphosphate + H(+). In terms of biological role, dGTPase preferentially hydrolyzes dGTP over the other canonical NTPs. The chain is Deoxyguanosinetriphosphate triphosphohydrolase from Escherichia fergusonii (strain ATCC 35469 / DSM 13698 / CCUG 18766 / IAM 14443 / JCM 21226 / LMG 7866 / NBRC 102419 / NCTC 12128 / CDC 0568-73).